An 89-amino-acid chain; its full sequence is Small ribosomal subunit protein uS15 (89 aa).

Belongs to the universal ribosomal protein uS15 family. In terms of assembly, part of the 30S ribosomal subunit. Forms a bridge to the 50S subunit in the 70S ribosome, contacting the 23S rRNA.

In terms of biological role, one of the primary rRNA binding proteins, it binds directly to 16S rRNA where it helps nucleate assembly of the platform of the 30S subunit by binding and bridging several RNA helices of the 16S rRNA. Its function is as follows. Forms an intersubunit bridge (bridge B4) with the 23S rRNA of the 50S subunit in the ribosome. This is Small ribosomal subunit protein uS15 from Proteus mirabilis (strain HI4320).